The chain runs to 131 residues: Small ribosomal subunit protein uS11 (131 aa).

This sequence belongs to the universal ribosomal protein uS11 family. In terms of assembly, part of the 30S ribosomal subunit. Interacts with proteins S7 and S18. Binds to IF-3.

In terms of biological role, located on the platform of the 30S subunit, it bridges several disparate RNA helices of the 16S rRNA. Forms part of the Shine-Dalgarno cleft in the 70S ribosome. The polypeptide is Small ribosomal subunit protein uS11 (Wolinella succinogenes (strain ATCC 29543 / DSM 1740 / CCUG 13145 / JCM 31913 / LMG 7466 / NCTC 11488 / FDC 602W) (Vibrio succinogenes)).